Here is a 338-residue protein sequence, read N- to C-terminus: Ketol-acid reductoisomerase (NADP(+)) (338 aa).

Residues 1 to 181 (MHVYYDKDCD…GGGRTGIIET (181 aa)) enclose the KARI N-terminal Rossmann domain. Residues 24–27 (YGSQ), arginine 47, serine 50, threonine 52, and 82–85 (DEFQ) each bind NADP(+). Histidine 107 is a catalytic residue. Glycine 133 contacts NADP(+). The KARI C-terminal knotted domain occupies 182–327 (TFKDETETDL…AKLRAMMPWI (146 aa)). Mg(2+)-binding residues include aspartate 190, glutamate 194, glutamate 226, and glutamate 230. Serine 251 provides a ligand contact to substrate.

The protein belongs to the ketol-acid reductoisomerase family. Mg(2+) serves as cofactor.

The enzyme catalyses (2R)-2,3-dihydroxy-3-methylbutanoate + NADP(+) = (2S)-2-acetolactate + NADPH + H(+). The catalysed reaction is (2R,3R)-2,3-dihydroxy-3-methylpentanoate + NADP(+) = (S)-2-ethyl-2-hydroxy-3-oxobutanoate + NADPH + H(+). Its pathway is amino-acid biosynthesis; L-isoleucine biosynthesis; L-isoleucine from 2-oxobutanoate: step 2/4. It functions in the pathway amino-acid biosynthesis; L-valine biosynthesis; L-valine from pyruvate: step 2/4. In terms of biological role, involved in the biosynthesis of branched-chain amino acids (BCAA). Catalyzes an alkyl-migration followed by a ketol-acid reduction of (S)-2-acetolactate (S2AL) to yield (R)-2,3-dihydroxy-isovalerate. In the isomerase reaction, S2AL is rearranged via a Mg-dependent methyl migration to produce 3-hydroxy-3-methyl-2-ketobutyrate (HMKB). In the reductase reaction, this 2-ketoacid undergoes a metal-dependent reduction by NADPH to yield (R)-2,3-dihydroxy-isovalerate. The polypeptide is Ketol-acid reductoisomerase (NADP(+)) (Cellvibrio japonicus (strain Ueda107) (Pseudomonas fluorescens subsp. cellulosa)).